Here is a 663-residue protein sequence, read N- to C-terminus: Methionine--tRNA ligase (663 aa).

Residues 13–23 (PYTNGPCHLGH) carry the 'HIGH' region motif. 4 residues coordinate Zn(2+): cysteine 144, cysteine 147, cysteine 156, and cysteine 160. Positions 326–330 (KFSKS) match the 'KMSKS' region motif. ATP is bound at residue lysine 329. In terms of domain architecture, tRNA-binding spans 565–663 (EFGKMKLIVG…QAVEPGTPIR (99 aa)).

This sequence belongs to the class-I aminoacyl-tRNA synthetase family. MetG type 1 subfamily. In terms of assembly, homodimer. Zn(2+) is required as a cofactor.

It is found in the cytoplasm. It carries out the reaction tRNA(Met) + L-methionine + ATP = L-methionyl-tRNA(Met) + AMP + diphosphate. Functionally, is required not only for elongation of protein synthesis but also for the initiation of all mRNA translation through initiator tRNA(fMet) aminoacylation. The sequence is that of Methionine--tRNA ligase from Methanosphaerula palustris (strain ATCC BAA-1556 / DSM 19958 / E1-9c).